The following is a 518-amino-acid chain: Sodium-dependent glucose transporter 1 (518 aa).

Transmembrane regions (helical) follow at residues 19-39, 53-73, 82-102, 107-127, 139-159, 221-241, 307-327, 347-367, 376-396, 400-420, 438-458, and 466-486; these read TFQDLATNVNRNISSLSFIFV, GFLVDVMNYFLLLGISMSATT, CKTAILLTVMMSIFGVSIGIL, NVLILAIWGDKGAPHMQALHF, LAKLALGPTASAENHTESDFH, FRRAKYHNALLCLLFLFFFFY, TSSLFLVLFDKNPICLWIATS, YTTIHGKSAAFFVIGASLGEM, LQGKYPDLPVVLYTSLGASIA, LFPVLYKLATSPLDRQRKEDR, EEENEEEDAEKWNEMDFEMIE, and SIIETSRSSLTEPTAEVYNQY. The segment covering 414-426 has biased composition (basic and acidic residues); sequence RQRKEDRKSEDQK. Residues 414–448 are disordered; the sequence is RQRKEDRKSEDQKALLSSSGLNEYEEENEEEDAEK. The span at 436–448 shows a compositional bias: acidic residues; sequence EYEEENEEEDAEK.

The protein belongs to the major facilitator superfamily.

It localises to the apical cell membrane. May function as a sodium-dependent glucose transporter. Potential channels for urea in the inner medulla of kidney. The protein is Sodium-dependent glucose transporter 1 of Homo sapiens (Human).